The sequence spans 456 residues: Trigger factor (456 aa).

Positions 192 to 277 (GDTVVIDFVG…IHEVKTKEVP (86 aa)) constitute a PPIase FKBP-type domain.

Belongs to the FKBP-type PPIase family. Tig subfamily.

It localises to the cytoplasm. It carries out the reaction [protein]-peptidylproline (omega=180) = [protein]-peptidylproline (omega=0). Functionally, involved in protein export. Acts as a chaperone by maintaining the newly synthesized protein in an open conformation. Functions as a peptidyl-prolyl cis-trans isomerase. This chain is Trigger factor, found in Streptococcus pyogenes serotype M2 (strain MGAS10270).